Reading from the N-terminus, the 1407-residue chain is DNA-directed RNA polymerase subunit beta' (1407 aa).

Residues Cys-70, Cys-72, Cys-85, and Cys-88 each contribute to the Zn(2+) site. Residues Asp-460, Asp-462, and Asp-464 each coordinate Mg(2+). 4 residues coordinate Zn(2+): Cys-814, Cys-888, Cys-895, and Cys-898. Lys-972 carries the N6-acetyllysine modification.

It belongs to the RNA polymerase beta' chain family. In terms of assembly, the RNAP catalytic core consists of 2 alpha, 1 beta, 1 beta' and 1 omega subunit. When a sigma factor is associated with the core the holoenzyme is formed, which can initiate transcription. Mg(2+) serves as cofactor. It depends on Zn(2+) as a cofactor.

It carries out the reaction RNA(n) + a ribonucleoside 5'-triphosphate = RNA(n+1) + diphosphate. Its function is as follows. DNA-dependent RNA polymerase catalyzes the transcription of DNA into RNA using the four ribonucleoside triphosphates as substrates. This chain is DNA-directed RNA polymerase subunit beta', found in Escherichia coli O6:H1 (strain CFT073 / ATCC 700928 / UPEC).